We begin with the raw amino-acid sequence, 398 residues long: Arylacetamide deacetylase (398 aa).

Residues 1-4 (GVKT) lie on the Cytoplasmic side of the membrane. The helical; Signal-anchor for type II membrane protein transmembrane segment at 5–22 (VLLLIVGVLGAYYVYTPL) threads the bilayer. The Lumenal portion of the chain corresponds to 23–398 (PDNIEEPWRL…QYFEWLRENV (376 aa)). Asn-77 carries an N-linked (GlcNAc...) asparagine glycan. The short motif at 110 to 112 (HGG) is the Involved in the stabilization of the negatively charged intermediate by the formation of the oxyanion hole element. Cysteines 115 and 339 form a disulfide. Residue Ser-188 is part of the active site. An N-linked (GlcNAc...) asparagine glycan is attached at Asn-281. Active-site residues include Asp-342 and His-372.

Belongs to the 'GDXG' lipolytic enzyme family. Post-translationally, glycosylated.

The protein resides in the endoplasmic reticulum membrane. It localises to the microsome membrane. The catalysed reaction is a triacylglycerol + H2O = a diacylglycerol + a fatty acid + H(+). With respect to regulation, inhibited by diisopropylphosphofluoridate (DFP). Displays cellular triglyceride lipase activity in liver, increases the levels of intracellular fatty acids derived from the hydrolysis of newly formed triglyceride stores and plays a role in very low-density lipoprotein assembly. Displays serine esterase activity in liver. Deacetylates a variety of arylacetamide substrates, including xenobiotic compounds and procarcinogens, converting them to the primary arylamide compounds and increasing their toxicity. The protein is Arylacetamide deacetylase of Oryctolagus cuniculus (Rabbit).